A 97-amino-acid chain; its full sequence is Co-chaperonin GroES (97 aa).

The protein belongs to the GroES chaperonin family. In terms of assembly, heptamer of 7 subunits arranged in a ring. Interacts with the chaperonin GroEL.

Its subcellular location is the cytoplasm. Its function is as follows. Together with the chaperonin GroEL, plays an essential role in assisting protein folding. The GroEL-GroES system forms a nano-cage that allows encapsulation of the non-native substrate proteins and provides a physical environment optimized to promote and accelerate protein folding. GroES binds to the apical surface of the GroEL ring, thereby capping the opening of the GroEL channel. In Buchnera aphidicola subsp. Baizongia pistaciae (strain Bp), this protein is Co-chaperonin GroES.